Reading from the N-terminus, the 295-residue chain is Ribosomal protein L11 methyltransferase (295 aa).

The S-adenosyl-L-methionine site is built by T146, G167, D189, and N231.

Belongs to the methyltransferase superfamily. PrmA family.

It localises to the cytoplasm. It carries out the reaction L-lysyl-[protein] + 3 S-adenosyl-L-methionine = N(6),N(6),N(6)-trimethyl-L-lysyl-[protein] + 3 S-adenosyl-L-homocysteine + 3 H(+). Methylates ribosomal protein L11. The chain is Ribosomal protein L11 methyltransferase from Vibrio parahaemolyticus serotype O3:K6 (strain RIMD 2210633).